The chain runs to 252 residues: Major prion protein (252 aa).

Positions 1 to 22 are cleaved as a signal peptide; the sequence is MANLGCWMLFLFVATWSDLGLC. The segment at 23–38 is interaction with ADGRG6; sequence KKRPKPGGWNTGGSRY. An interaction with GRB2, ERI3 and SYN1 region spans residues 23-229; that stretch reads KKRPKPGGWN…ESQAYYQRGS (207 aa). Residues 26-106 are disordered; that stretch reads PKPGGWNTGG…QWNKPSKPKT (81 aa). Repeat copies occupy residues 51–58, 59–66, 67–74, 75–82, and 83–90. The interval 51 to 90 is 5 X 8 AA tandem repeats of P-H-G-G-G-W-G-Q; that stretch reads PQGGGWGQPHGGGWGQPHGGGWGQPHGGGWGQPHGGGWGQ. A compositionally biased stretch (gly residues) spans 52–94; it reads QGGGWGQPHGGGWGQPHGGGWGQPHGGGWGQPHGGGWGQGGGT. Residues His-60, Gly-61, Gly-62, His-68, Gly-69, Gly-70, His-76, Gly-77, Gly-78, His-84, Gly-85, and Gly-86 each contribute to the Cu(2+) site. A disulfide bond links Cys-178 and Cys-213. Residues Asn-180 and Asn-196 are each glycosylated (N-linked (GlcNAc...) asparagine). A lipid anchor (GPI-anchor amidated serine) is attached at Ser-229. Positions 230-252 are cleaved as a propeptide — removed in mature form; it reads SMVLFSSPPVILLISFLIFLIVG.

Belongs to the prion family. As to quaternary structure, monomer and homodimer. Has a tendency to aggregate into amyloid fibrils containing a cross-beta spine, formed by a steric zipper of superposed beta-strands. Soluble oligomers may represent an intermediate stage on the path to fibril formation. Copper binding may promote oligomerization. Interacts with GRB2, APP, ERI3/PRNPIP and SYN1. Mislocalized cytosolically exposed PrP interacts with MGRN1; this interaction alters MGRN1 subcellular location and causes lysosomal enlargement. Interacts with APP. Interacts with KIAA1191. Interacts with ADGRG6.

The protein localises to the cell membrane. Its subcellular location is the golgi apparatus. Functionally, its primary physiological function is unclear. May play a role in neuronal development and synaptic plasticity. May be required for neuronal myelin sheath maintenance. May promote myelin homeostasis through acting as an agonist for ADGRG6 receptor. May play a role in iron uptake and iron homeostasis. Soluble oligomers are toxic to cultured neuroblastoma cells and induce apoptosis (in vitro). Association with GPC1 (via its heparan sulfate chains) targets PRNP to lipid rafts. Also provides Cu(2+) or Zn(2+) for the ascorbate-mediated GPC1 deaminase degradation of its heparan sulfate side chains. The chain is Major prion protein (PRNP) from Callithrix jacchus (White-tufted-ear marmoset).